Here is a 370-residue protein sequence, read N- to C-terminus: 2-Hydroxyacid oxidase 1 (370 aa).

Residues 1-365 enclose the FMN hydroxy acid dehydrogenase domain; the sequence is MLPRLICIND…DKTLVRKNPL (365 aa). Tyrosine 26 lines the glyoxylate pocket. Residues 79 to 81, serine 108, and glutamine 130 contribute to the FMN site; that span reads ATA. Position 132 (tyrosine 132) interacts with glyoxylate. Threonine 158 provides a ligand contact to FMN. Arginine 167 is a binding site for glyoxylate. Position 184 is an N6-succinyllysine (lysine 184). Phosphoserine is present on residues serine 194 and serine 230. 2 residues coordinate FMN: lysine 236 and serine 258. Residues histidine 260 and arginine 263 each contribute to the glyoxylate site. Histidine 260 (proton acceptor) is an active-site residue. Residues 291–295 and 314–315 contribute to the FMN site; these read DGGVR and GR. Residues 368–370 carry the Microbody targeting signal motif; it reads SKI.

Belongs to the FMN-dependent alpha-hydroxy acid dehydrogenase family. Homotetramer. The cofactor is FMN. As to expression, highly expressed in liver.

It is found in the peroxisome matrix. It carries out the reaction a (2S)-2-hydroxycarboxylate + O2 = a 2-oxocarboxylate + H2O2. The catalysed reaction is glycolate + O2 = glyoxylate + H2O2. The enzyme catalyses glyoxylate + O2 + H2O = oxalate + H2O2 + H(+). It catalyses the reaction 2-hydroxyhexadecanoate + O2 = 2-oxohexadecanoate + H2O2. It carries out the reaction 2-hydroxyoctanoate + O2 = 2-oxooctanoate + H2O2. Its pathway is amino-acid biosynthesis; glycine biosynthesis. Its activity is regulated as follows. Inhibited by its product oxalate. Inhibited by high concentrations of dichlorophenolindophenol (DCIP) in vitro. Functionally, broad substrate specificity (S)-2-hydroxy-acid oxidase that preferentially oxidizes glycolate. The glyoxylate produced by the oxidation of glycolate can then be utilized by alanine-glyoxylate aminotransferase for the peroxisomal synthesis of glycine; this pathway appears to be an important step for the detoxification of glyoxylate which, if allowed to accumulate, may be metabolized to oxalate with formation of kidney stones. Can also catalyze the oxidation of glyoxylate, and long chain hydroxyacids such as 2-hydroxyhexadecanoate and 2-hydroxyoctanoate, albeit with much lower catalytic efficiency. Active in vitro with the artificial electron acceptor 2,6-dichlorophenolindophenol (DCIP), but O2 is believed to be the physiological electron acceptor, leading to the production of H2O2. Is not active on L-lactate and 2-hydroxybutanoate. The chain is 2-Hydroxyacid oxidase 1 from Homo sapiens (Human).